A 510-amino-acid chain; its full sequence is NAD(P)H-quinone oxidoreductase subunit 2 A, chloroplastic (510 aa).

Helical transmembrane passes span 31-51, 59-79, 99-119, 124-144, 149-169, 183-203, 229-249, 295-315, 323-343, 354-374, 395-415, and 418-438; these read FIFP…IDLT, WFYF…LFRW, IFQF…VEYI, MAIT…MFLC, LITI…LSGY, YLLM…WLYG, ISIA…PAPF, WHLL…LLAI, MLAY…IVGD, YMLF…LFGL, ALSL…AGFF, and LYLF…IGLL.

Belongs to the complex I subunit 2 family. As to quaternary structure, NDH is composed of at least 16 different subunits, 5 of which are encoded in the nucleus.

Its subcellular location is the plastid. The protein localises to the chloroplast thylakoid membrane. The catalysed reaction is a plastoquinone + NADH + (n+1) H(+)(in) = a plastoquinol + NAD(+) + n H(+)(out). The enzyme catalyses a plastoquinone + NADPH + (n+1) H(+)(in) = a plastoquinol + NADP(+) + n H(+)(out). NDH shuttles electrons from NAD(P)H:plastoquinone, via FMN and iron-sulfur (Fe-S) centers, to quinones in the photosynthetic chain and possibly in a chloroplast respiratory chain. The immediate electron acceptor for the enzyme in this species is believed to be plastoquinone. Couples the redox reaction to proton translocation, and thus conserves the redox energy in a proton gradient. This chain is NAD(P)H-quinone oxidoreductase subunit 2 A, chloroplastic, found in Saccharum officinarum (Sugarcane).